Reading from the N-terminus, the 482-residue chain is Histone deacetylase 1 (482 aa).

Residues 9 to 321 (RKVCYYYDGD…WTYETAVALD (313 aa)) are histone deacetylase. 2 residues coordinate 1D-myo-inositol 1,4,5,6-tetrakisphosphate: G27 and K31. K74 is subject to N6-acetyllysine; alternate. A Glycyl lysine isopeptide (Lys-Gly) (interchain with G-Cter in SUMO2); alternate cross-link involves residue K74. H141 is an active-site residue. Residues D176 and H178 each coordinate Zn(2+). Position 220 is an N6-acetyllysine (K220). Position 261 is an S-nitrosocysteine (C261). Residue D264 coordinates Zn(2+). R270 is a binding site for 1D-myo-inositol 1,4,5,6-tetrakisphosphate. C273 is subject to S-nitrosocysteine. A compositionally biased stretch (acidic residues) spans 390–400 (PEESGDEDEED). Residues 390–482 (PEESGDEDEE…KGVKEEVKLA (93 aa)) form a disordered region. A phosphoserine mark is found at S393, S406, S409, S421, and S423. Over residues 401–416 (PDKRISICSSDKRIAC) the composition is skewed to basic and acidic residues. Residues 417–427 (EEEFSDSDEEG) show a composition bias toward acidic residues. K432 bears the N6-methylated lysine; by EHMT2 mark. K438 is covalently cross-linked (Glycyl lysine isopeptide (Lys-Gly) (interchain with G-Cter in SUMO2)). Residues 443-482 (VKTEDEKEKDPEEKKEVTEEEKTKEEKQEAKGVKEEVKLA) show a composition bias toward basic and acidic residues. A Glycyl lysine isopeptide (Lys-Gly) (interchain with G-Cter in SUMO2); alternate cross-link involves residue K444. K444 participates in a covalent cross-link: Glycyl lysine isopeptide (Lys-Gly) (interchain with G-Cter in SUMO); alternate. Residues K456, K457, and K473 each participate in a glycyl lysine isopeptide (Lys-Gly) (interchain with G-Cter in SUMO2) cross-link. A Glycyl lysine isopeptide (Lys-Gly) (interchain with G-Cter in SUMO2); alternate cross-link involves residue K476. K476 participates in a covalent cross-link: Glycyl lysine isopeptide (Lys-Gly) (interchain with G-Cter in SUMO); alternate. A Glycyl lysine isopeptide (Lys-Gly) (interchain with G-Cter in SUMO2) cross-link involves residue K480.

This sequence belongs to the histone deacetylase family. HD type 1 subfamily. In terms of assembly, part of the core histone deacetylase (HDAC) complex composed of HDAC1, HDAC2, RBBP4 and RBBP7, the core complex associates with SIN3, SAP18 and SAP30 to form the SIN3 HDAC complex. Component of the nucleosome remodeling and deacetylase (NuRD) repressor complex, composed of core proteins MTA1, MTA2, MTA3, RBBP4, RBBP7, HDAC1, HDAC2, MBD2, MBD3, and peripherally associated proteins CDK2AP1, CDK2AP2, GATAD2A, GATAD2B, CHD3, CHD4 and CHD5. The exact stoichiometry of the NuRD complex is unknown, and some subunits such as MBD2 and MBD3, GATAD2A and GATAD2B, and CHD3, CHD4 and CHD5 define mutually exclusive NuRD complexes. Component of a BHC histone deacetylase complex that contains HDAC1, HDAC2, HMG20B/BRAF35, KDM1A, RCOR1/CoREST and PHF21A/BHC80. The BHC complex may also contain ZMYM2, ZNF217, ZMYM3, GSE1 and GTF2I. Component of a mSin3A corepressor complex that contains SIN3A, SAP130, SUDS3/SAP45, ARID4B/SAP180, HDAC1 and HDAC2. Found in a trimeric complex with APBB1 and TSHZ3; the interaction between HDAC1 and APBB1 is mediated by TSHZ3. Forms a complex comprising APPL1, RUVBL2, APPL2, CTNNB1 and HDAC2. Component of a RCOR/GFI/KDM1A/HDAC complex. Part of a complex composed of TRIM28, HDAC1, HDAC2 and EHMT2. Part of a complex containing at least CDYL, MIER1, MIER2, HDAC1 and HDAC2. The large PER complex involved in the histone deacetylation is composed of at least HDAC1, PER2, SFPQ and SIN3A. Associates with the 9-1-1 complex; interacts with HUS1. Found in a complex with DNMT3A and HDAC7. Found in a complex with YY1, SIN3A and GON4L. Identified in a histone deacetylase complex that contains DNTTIP1, HDAC1 and MIDEAS; this complex assembles into a tetramer that contains four copies of each protein chain. Found in a complex composed of at least SINHCAF, SIN3A, HDAC1, SAP30, RBBP4, OGT and TET1. Component of the SIN3B complex, which includes SIN3B, HDAC1, PHF12 and MORF4L1. Interacts with GFI1; the interaction is direct. Interacts directly with GFI1B. Interacts with TSHZ3 (via N-terminus); the interaction is direct. Interacts with APEX1; the interaction is not dependent on the acetylated status of APEX1. Interacts with BANP. Interacts with BAZ2A/TIP5. Interacts with BCL6. Interacts with BCOR. Interacts with BHLHE40/DEC1. Interacts with BRCC3; this interaction is enhanced in the presence of PWWP2B. Interacts with BRMS1. Interacts with BRMS1L. Interacts with C10orf90/FATS (via its N-terminal); the interaction prevents binding of HDAC1 to CDKN1A/p21 and facilitates the acetylation and stabilization of CDKN1A/p21. Interacts with CBFA2T3. Interacts with CCAR2. Interacts with CDK2AP1. Interacts with CHD3. Interacts with CHD4. Interacts with CHFR. Interacts with CIART. Interacts with CDKN1A/p21. Interacts with CDK5 complexed to CDK5R1 (p25). Interacts with CRY1. Interacts with DAXX. Interacts with DDIT3/CHOP. Interacts with DDX5. Interacts with DHX36; this interaction occurs in a RNA-dependent manner. Interacts with DNMT1. Interacts with DNTTIP1. Interacts with E4F1. Interacts with EP300. Interacts with ERCC6. Interacts with GATAD2A. Interacts with HCFC1. Interacts with HDAC9. Interacts with HUS1. Interacts with INSM1. Interacts with KDM4A. Interacts with KDM5A; this interaction impairs histone deacetylation. Interacts with KDM5B. Interacts with KLF1. Interacts with MBD3L2. Interacts with MIER1. Interacts with NFE4. Interacts with NR4A2/NURR1. Interacts with NR1D2 (via C-terminus). Interacts with NRIP1. Interacts with NSD2. Interacts with PACS2. Interacts with PHB2. Interacts with PPHLN1. Interacts with PRDM6. Interacts with PRDM16. Interacts with PWWP2A in a MTA1-dependent manner. Interacts with PWWP2B. Interacts with RB1. Interacts with RERE. Interacts with SANBR (via the BTB domain). Interacts with SAMSN1. Interacts with SAP30L. Interacts with SETDB1. Interacts with SIN3A. Interacts with SMAD3. Interacts with SMAD4; positively regulated by ZBTB7A. Interacts with SMARCAD1. Interacts with SMARCA4/BRG1. Interacts with SMYD2. Interacts with SMYD4 (via MYND-type zinc finger). Interacts with SP1; the interaction deacetylates SP1 and regulates its transcriptional activity. Interacts with SP3; the interaction deacetylates SP3 and regulates its transcriptional activity. In vitro, C(18) ceramides increase this interaction and the subsequent SP3 deacetylation and SP3-mediated repression of the TERT promoter. Interacts with SPEN/MINT. Interacts with SPHK2. Interacts with SUV39H1. Interacts with TGIF. Interacts with TGIF2. Interacts with TRAF6. Interacts with TRIM28; the interaction recruits HDAC1 to E2F1 and inhibits its acetylation. Interacts with TSC22D3 isoform 1; this interaction affects HDAC1 activity on MYOG promoter and thus inhibits MYOD1 transcriptional activity. Interacts with UHRF1. Interacts with UHRF2. Interacts with ZBTB7A. Interacts with ZMYND8. Interacts with ZMYND15. Interacts with ZNF431. Interacts with ZNF516; this interaction is enhanced in the presence of PWWP2B. Interacts with ZNF541. Interacts with ZNF638. Interacts with ZNHIT1. Interacts with the non-histone region of MACROH2A1. Identified in a complex with HDAC2, KCTD19, DNTTIP1 and ZNF541. Interacts with MSX3. Interacts with VRK1. The cofactor is Zn(2+). Post-translationally, sumoylated on Lys-444 and Lys-476; which promotes enzymatic activity. Desumoylated by SENP1. In terms of processing, phosphorylation on Ser-421 and Ser-423 promotes enzymatic activity and interactions with NuRD and SIN3 complexes. Phosphorylated by CDK5. Ubiquitinated by CHFR and KCTD11, leading to its degradation by the proteasome.

It localises to the nucleus. The enzyme catalyses N(6)-acetyl-L-lysyl-[histone] + H2O = L-lysyl-[histone] + acetate. It catalyses the reaction N(6)-acetyl-L-lysyl-[protein] + H2O = L-lysyl-[protein] + acetate. It carries out the reaction N(6)-(2E)-butenoyl-L-lysyl-[protein] + H2O = (2E)-2-butenoate + L-lysyl-[protein]. The catalysed reaction is N(6)-[(S)-lactoyl]-L-lysyl-[protein] + H2O = (S)-lactate + L-lysyl-[protein]. With respect to regulation, inositol tetraphosphate (1D-myo-inositol 1,4,5,6-tetrakisphosphate) may act as an intermolecular glue between HDAC1 and N-Cor repressor complex components. Its function is as follows. Histone deacetylase that catalyzes the deacetylation of lysine residues on the N-terminal part of the core histones (H2A, H2B, H3 and H4). Histone deacetylation gives a tag for epigenetic repression and plays an important role in transcriptional regulation, cell cycle progression and developmental events. Histone deacetylases act via the formation of large multiprotein complexes. Acts as a component of the histone deacetylase NuRD complex which participates in the remodeling of chromatin. As part of the SIN3B complex is recruited downstream of the constitutively active genes transcriptional start sites through interaction with histones and mitigates histone acetylation and RNA polymerase II progression within transcribed regions contributing to the regulation of transcription. Also functions as a deacetylase for non-histone targets, such as NR1D2, RELA, SP1, SP3, STAT3 and TSHZ3. Deacetylates SP proteins, SP1 and SP3, and regulates their function. Component of the BRG1-RB1-HDAC1 complex, which negatively regulates the CREST-mediated transcription in resting neurons. Upon calcium stimulation, HDAC1 is released from the complex and CREBBP is recruited, which facilitates transcriptional activation. Deacetylates TSHZ3 and regulates its transcriptional repressor activity. Deacetylates 'Lys-310' in RELA and thereby inhibits the transcriptional activity of NF-kappa-B. Deacetylates NR1D2 and abrogates the effect of KAT5-mediated relieving of NR1D2 transcription repression activity. Component of a RCOR/GFI/KDM1A/HDAC complex that suppresses, via histone deacetylase (HDAC) recruitment, a number of genes implicated in multilineage blood cell development. Involved in CIART-mediated transcriptional repression of the circadian transcriptional activator: CLOCK-BMAL1 heterodimer. Required for the transcriptional repression of circadian target genes, such as PER1, mediated by the large PER complex or CRY1 through histone deacetylation. In addition to protein deacetylase activity, also has protein-lysine deacylase activity: acts as a protein decrotonylase and delactylase by mediating decrotonylation ((2E)-butenoyl) and delactylation (lactoyl) of histones, respectively. The sequence is that of Histone deacetylase 1 (HDAC1) from Bos taurus (Bovine).